Reading from the N-terminus, the 249-residue chain is Anamorsin homolog (249 aa).

The N-terminal SAM-like domain stretch occupies residues 1 to 130; the sequence is MEQFKDLQKS…ETGSAARLSF (130 aa). Positions 131-161 are linker; that stretch reads AKKAAGVNVWKISGDDEELIDEEDLLDEADK. The [2Fe-2S] cluster site is built by Cys172, Cys181, Cys184, and Cys186. The segment at 172-186 is fe-S binding site A; that stretch reads CSTTGKRKACKNCSC. Residues Cys210, Cys213, Cys221, and Cys224 each contribute to the [4Fe-4S] cluster site. 2 short sequence motifs (cx2C motif) span residues 210–213 and 221–224; these read CGNC and CSTC. Positions 210–224 are fe-S binding site B; it reads CGNCYLGDAFRCSTC.

The protein belongs to the anamorsin family. Monomer. Requires [2Fe-2S] cluster as cofactor. The cofactor is [4Fe-4S] cluster.

The protein localises to the cytoplasm. Its subcellular location is the mitochondrion intermembrane space. Its function is as follows. Component of the cytosolic iron-sulfur (Fe-S) protein assembly (CIA) machinery. Required for the maturation of extramitochondrial Fe-S proteins. Part of an electron transfer chain functioning in an early step of cytosolic Fe-S biogenesis, facilitating the de novo assembly of a [4Fe-4S] cluster on the cytosolic Fe-S scaffold complex. Electrons are transferred from NADPH via a FAD- and FMN-containing diflavin oxidoreductase. Together with the diflavin oxidoreductase, also required for the assembly of the diferric tyrosyl radical cofactor of ribonucleotide reductase (RNR), probably by providing electrons for reduction during radical cofactor maturation in the catalytic small subunit. This chain is Anamorsin homolog, found in Drosophila grimshawi (Hawaiian fruit fly).